We begin with the raw amino-acid sequence, 324 residues long: Elongation factor P--(R)-beta-lysine ligase (324 aa).

Residue 75-77 (SPE) coordinates substrate. ATP-binding positions include 99 to 101 (RNE) and Asn-108. Substrate is bound at residue Tyr-117. 243 to 244 (EL) provides a ligand contact to ATP. Glu-250 contributes to the substrate binding site. Position 299 (Gly-299) interacts with ATP.

The protein belongs to the class-II aminoacyl-tRNA synthetase family. EpmA subfamily. Homodimer.

The enzyme catalyses D-beta-lysine + L-lysyl-[protein] + ATP = N(6)-((3R)-3,6-diaminohexanoyl)-L-lysyl-[protein] + AMP + diphosphate + H(+). In terms of biological role, with EpmB is involved in the beta-lysylation step of the post-translational modification of translation elongation factor P (EF-P). Catalyzes the ATP-dependent activation of (R)-beta-lysine produced by EpmB, forming a lysyl-adenylate, from which the beta-lysyl moiety is then transferred to the epsilon-amino group of a conserved specific lysine residue in EF-P. This is Elongation factor P--(R)-beta-lysine ligase from Vibrio cholerae serotype O1 (strain ATCC 39315 / El Tor Inaba N16961).